We begin with the raw amino-acid sequence, 189 residues long: Transcription factor FapR (189 aa).

The protein belongs to the FapR family.

Functionally, transcriptional factor involved in regulation of membrane lipid biosynthesis by repressing genes involved in fatty acid and phospholipid metabolism. This Listeria welshimeri serovar 6b (strain ATCC 35897 / DSM 20650 / CCUG 15529 / CIP 8149 / NCTC 11857 / SLCC 5334 / V8) protein is Transcription factor FapR.